A 227-amino-acid polypeptide reads, in one-letter code: Small ribosomal subunit protein uS7 (227 aa).

Composition is skewed to acidic residues over residues 1 to 12 (MSESDTDPDIDD) and 20 to 31 (NDVDVAVDESES). The interval 1-43 (MSESDTDPDIDDDAHNNGDNDVDVAVDESESAETTTDTDTASA) is disordered. Low complexity predominate over residues 32–43 (AETTTDTDTASA).

Belongs to the universal ribosomal protein uS7 family. Part of the 30S ribosomal subunit.

One of the primary rRNA binding proteins, it binds directly to 16S rRNA where it nucleates assembly of the head domain of the 30S subunit. Is located at the subunit interface close to the decoding center. This Haloquadratum walsbyi (strain DSM 16790 / HBSQ001) protein is Small ribosomal subunit protein uS7.